Here is a 408-residue protein sequence, read N- to C-terminus: 1-deoxy-D-xylulose 5-phosphate reductoisomerase (408 aa).

Positions 27, 28, 29, 30, 53, 54, 55, and 140 each coordinate NADPH. Residue lysine 141 coordinates 1-deoxy-D-xylulose 5-phosphate. An NADPH-binding site is contributed by glutamate 142. Aspartate 166 contributes to the Mn(2+) binding site. 1-deoxy-D-xylulose 5-phosphate is bound by residues serine 167, glutamate 168, serine 192, and histidine 215. Residue glutamate 168 coordinates Mn(2+). Residue glycine 221 coordinates NADPH. The 1-deoxy-D-xylulose 5-phosphate site is built by serine 228, asparagine 233, lysine 234, and glutamate 237. A Mn(2+)-binding site is contributed by glutamate 237.

This sequence belongs to the DXR family. Requires Mg(2+) as cofactor. Mn(2+) serves as cofactor.

The catalysed reaction is 2-C-methyl-D-erythritol 4-phosphate + NADP(+) = 1-deoxy-D-xylulose 5-phosphate + NADPH + H(+). The protein operates within isoprenoid biosynthesis; isopentenyl diphosphate biosynthesis via DXP pathway; isopentenyl diphosphate from 1-deoxy-D-xylulose 5-phosphate: step 1/6. Its function is as follows. Catalyzes the NADPH-dependent rearrangement and reduction of 1-deoxy-D-xylulose-5-phosphate (DXP) to 2-C-methyl-D-erythritol 4-phosphate (MEP). The polypeptide is 1-deoxy-D-xylulose 5-phosphate reductoisomerase (Nitratidesulfovibrio vulgaris (strain DP4) (Desulfovibrio vulgaris)).